We begin with the raw amino-acid sequence, 678 residues long: uncharacterized protein (678 aa).

This is an uncharacterized protein from Ostreid herpesvirus 1 (isolate France) (OsHV-1).